The following is a 247-amino-acid chain: Acetoacetate decarboxylase 1 (247 aa).

Lys116 functions as the Schiff-base intermediate with acetoacetate in the catalytic mechanism.

Belongs to the ADC family.

The enzyme catalyses acetoacetate + H(+) = acetone + CO2. In terms of biological role, catalyzes the conversion of acetoacetate to acetone and carbon dioxide. The polypeptide is Acetoacetate decarboxylase 1 (Mesorhizobium japonicum (strain LMG 29417 / CECT 9101 / MAFF 303099) (Mesorhizobium loti (strain MAFF 303099))).